We begin with the raw amino-acid sequence, 670 residues long: UvrABC system protein B (670 aa).

The Helicase ATP-binding domain occupies 26–183; the sequence is EGLEDGLAHQ…RRLAELQYAR (158 aa). ATP is bound at residue 39–46; it reads GVTGSGKT. Positions 92–115 match the Beta-hairpin motif; the sequence is YYDYYQPEAYVPSSDTFIEKDAAV. A Helicase C-terminal domain is found at 431 to 597; sequence QVDDLLSEIR…GLNKKVSDVL (167 aa). The UVR domain occupies 630–665; it reads DQKIRELEAQMYTHAQNLEFELAAGLRDEIHQLREQ.

It belongs to the UvrB family. In terms of assembly, forms a heterotetramer with UvrA during the search for lesions. Interacts with UvrC in an incision complex.

It localises to the cytoplasm. Functionally, the UvrABC repair system catalyzes the recognition and processing of DNA lesions. A damage recognition complex composed of 2 UvrA and 2 UvrB subunits scans DNA for abnormalities. Upon binding of the UvrA(2)B(2) complex to a putative damaged site, the DNA wraps around one UvrB monomer. DNA wrap is dependent on ATP binding by UvrB and probably causes local melting of the DNA helix, facilitating insertion of UvrB beta-hairpin between the DNA strands. Then UvrB probes one DNA strand for the presence of a lesion. If a lesion is found the UvrA subunits dissociate and the UvrB-DNA preincision complex is formed. This complex is subsequently bound by UvrC and the second UvrB is released. If no lesion is found, the DNA wraps around the other UvrB subunit that will check the other stand for damage. This Serratia proteamaculans (strain 568) protein is UvrABC system protein B.